The following is a 916-amino-acid chain: Protein translocase subunit SecA (916 aa).

Residues Gln-87, 105 to 109 (GEGKT), and Asp-512 contribute to the ATP site. The segment at 857-916 (QHAEAPSMEQAVAGEEEELPEGPAPVVPLEPVRNEQKIGRNEPCPCGSGKKYKHCHGQLD) is disordered. Residues Cys-900, Cys-902, Cys-911, and His-912 each contribute to the Zn(2+) site. Residues 906 to 916 (KKYKHCHGQLD) show a composition bias toward basic residues.

Belongs to the SecA family. As to quaternary structure, monomer and homodimer. Part of the essential Sec protein translocation apparatus which comprises SecA, SecYEG and auxiliary proteins SecDF-YajC and YidC. It depends on Zn(2+) as a cofactor.

It localises to the cell inner membrane. The protein resides in the cytoplasm. It carries out the reaction ATP + H2O + cellular proteinSide 1 = ADP + phosphate + cellular proteinSide 2.. Its function is as follows. Part of the Sec protein translocase complex. Interacts with the SecYEG preprotein conducting channel. Has a central role in coupling the hydrolysis of ATP to the transfer of proteins into and across the cell membrane, serving both as a receptor for the preprotein-SecB complex and as an ATP-driven molecular motor driving the stepwise translocation of polypeptide chains across the membrane. The polypeptide is Protein translocase subunit SecA (Pseudomonas aeruginosa (strain LESB58)).